A 476-amino-acid chain; its full sequence is Adenylyl cyclase-associated protein 2 (476 aa).

The segment at 223 to 322 (SILSSGPGLP…KSNSPQKHTP (100 aa)) is disordered. Pro residues predominate over residues 230 to 247 (GLPPPPPPPPPPGPPPPF). Residues 288-299 (KNPSLRAQGQIR) show a composition bias toward polar residues. Phosphoserine occurs at positions 300 and 308. Residues 300–317 (SPTKTHTPSPTSPKSNSP) are compositionally biased toward low complexity. The C-CAP/cofactor C-like domain occupies 317–454 (PQKHTPVLEL…QDDDYREFPI (138 aa)).

This sequence belongs to the CAP family. In terms of tissue distribution, expressed in the heart, skeletal muscle, and brain.

The protein localises to the cell membrane. Its function is as follows. Involved in the regulation of actin polymerization. The protein is Adenylyl cyclase-associated protein 2 (Cap2) of Mus musculus (Mouse).